The following is a 246-amino-acid chain: Probable transcriptional regulatory protein YebC (246 aa).

Positions 1–20 are disordered; that stretch reads MAGHSKWANTRHRKAAQDAK.

The protein belongs to the TACO1 family.

The protein localises to the cytoplasm. In Shigella dysenteriae serotype 1 (strain Sd197), this protein is Probable transcriptional regulatory protein YebC.